A 130-amino-acid polypeptide reads, in one-letter code: Small ribosomal subunit protein uS8 (130 aa).

The protein belongs to the universal ribosomal protein uS8 family. As to quaternary structure, part of the 30S ribosomal subunit. Contacts proteins S5 and S12.

Its function is as follows. One of the primary rRNA binding proteins, it binds directly to 16S rRNA central domain where it helps coordinate assembly of the platform of the 30S subunit. This is Small ribosomal subunit protein uS8 from Moorella thermoacetica (strain ATCC 39073 / JCM 9320).